The sequence spans 692 residues: Elongation factor G 2 (692 aa).

The tr-type G domain maps to 8–283 (EKTRNIGIMA…AVIDYMPSPV (276 aa)). GTP contacts are provided by residues 17-24 (AHIDAGKT), 81-85 (DTPGH), and 135-138 (NKMD).

It belongs to the TRAFAC class translation factor GTPase superfamily. Classic translation factor GTPase family. EF-G/EF-2 subfamily.

It is found in the cytoplasm. In terms of biological role, catalyzes the GTP-dependent ribosomal translocation step during translation elongation. During this step, the ribosome changes from the pre-translocational (PRE) to the post-translocational (POST) state as the newly formed A-site-bound peptidyl-tRNA and P-site-bound deacylated tRNA move to the P and E sites, respectively. Catalyzes the coordinated movement of the two tRNA molecules, the mRNA and conformational changes in the ribosome. This chain is Elongation factor G 2, found in Syntrophotalea carbinolica (strain DSM 2380 / NBRC 103641 / GraBd1) (Pelobacter carbinolicus).